The chain runs to 161 residues: 18.3 kDa class I heat shock protein (161 aa).

In terms of domain architecture, sHSP spans 48–161; it reads ETAAFANARI…KPQVKAINVY (114 aa).

This sequence belongs to the small heat shock protein (HSP20) family. Forms oligomeric structures.

The protein localises to the cytoplasm. The protein is 18.3 kDa class I heat shock protein (HSP18) of Oxybasis rubra (Red goosefoot).